A 248-amino-acid polypeptide reads, in one-letter code: 3-deoxy-manno-octulosonate cytidylyltransferase (248 aa).

Belongs to the KdsB family. Mg(2+) is required as a cofactor.

The protein localises to the cytoplasm. The catalysed reaction is 3-deoxy-alpha-D-manno-oct-2-ulosonate + CTP = CMP-3-deoxy-beta-D-manno-octulosonate + diphosphate. Its pathway is nucleotide-sugar biosynthesis; CMP-3-deoxy-D-manno-octulosonate biosynthesis; CMP-3-deoxy-D-manno-octulosonate from 3-deoxy-D-manno-octulosonate and CTP: step 1/1. It participates in bacterial outer membrane biogenesis; lipopolysaccharide biosynthesis. Its function is as follows. Activates KDO (a required 8-carbon sugar) for incorporation into bacterial lipopolysaccharide in Gram-negative bacteria. The sequence is that of 3-deoxy-manno-octulosonate cytidylyltransferase from Escherichia coli O157:H7.